Consider the following 357-residue polypeptide: Neuronal-specific septin-3 (357 aa).

The span at 1-10 (MSKGLPETRT) shows a compositional bias: basic and acidic residues. Residues 1 to 29 (MSKGLPETRTDAAMSELVPEPRPKPAVPM) are disordered. Residues 58–330 (TGFDFNIMVV…ETYRAKRLND (273 aa)) form the Septin-type G domain. Positions 68–75 (GQSGLGKS) are G1 motif. Residue 68–75 (GQSGLGKS) participates in GTP binding. The residue at position 91 (serine 91) is a Phosphoserine. Threonine 102 serves as a coordination point for GTP. Positions 125–128 (DTPG) are G3 motif. Positions 207 to 210 (AKAD) are G4 motif. GTP-binding positions include 208–216 (KADTMTLEE), glycine 264, and arginine 279.

It belongs to the TRAFAC class TrmE-Era-EngA-EngB-Septin-like GTPase superfamily. Septin GTPase family. In terms of assembly, septins polymerize into heterooligomeric protein complexes that form filaments, and can associate with cellular membranes, actin filaments and microtubules. GTPase activity is required for filament formation. In terms of processing, phosphorylated by PKG on serine residues. Phosphorylated by PKG on Ser-91.

The protein resides in the cytoplasm. The protein localises to the cytoskeleton. It is found in the synapse. In terms of biological role, filament-forming cytoskeletal GTPase. May play a role in cytokinesis (Potential). The chain is Neuronal-specific septin-3 from Bos taurus (Bovine).